Reading from the N-terminus, the 276-residue chain is Bifunctional esterase/perhydrolase DCH (276 aa).

The 232-residue stretch at 23–254 (PVIFFHHGWP…NGKLISYPGF (232 aa)) folds into the AB hydrolase-1 domain. Residues Ser97, Asp227, and His256 contribute to the active site.

Belongs to the AB hydrolase superfamily. Bacterial non-heme haloperoxidase / perhydrolase family. As to quaternary structure, homodimer.

The enzyme catalyses 3,4-dihydrocoumarin + H2O = 3-(2-hydroxyphenyl)propanoate + H(+). The catalysed reaction is peracetic acid + H2O = acetate + H2O2 + H(+). It carries out the reaction a percarboxylic acid + H2O = a carboxylate + H2O2 + H(+). Inhibited by the serine protease inhibitors diisopropyl fluorophosphate and phenylmethanesulfonyl fluoride. In terms of biological role, multifunctional enzyme, which shows esterase and perhydrolase activities, and is capable of organic acid-assisted bromination of organic compounds. Catalyzes the hydrolysis of 3,4-dihydrocoumarin. Aromatic lactones other than 3,4-dihydrocoumarin, such as 2-coumaranone and homogentisic acid lactone, are also substrates, but their activities relative to that of 3,4-dihydrocoumarin are quite low. Also catalyzes the hydrolysis of several linear esters, with specificity toward methyl esters. In addition, shows perhydrolase activity and catalyzes the dose- and time-dependent degradation of peracetic acid, a broad-spectrum biocide, to acetic acid and hydrogen peroxide. It suggests that in vivo DCH may play a role in the oxidative stress defense system and detoxify peroxoacids in conjunction with the catalase, i.e. peroxoacids are first hydrolyzed to the corresponding acids and hydrogen peroxide by DCH, and then the resulting hydrogen peroxide is degraded by the catalase. Also shows organic acid-assisted bromination activity toward monochlorodimedon when incubated with hydrogen peroxide and dihydrocoumarin or an organic acid, such as acetate and n-butyrate. The sequence is that of Bifunctional esterase/perhydrolase DCH from Acinetobacter calcoaceticus.